A 205-amino-acid chain; its full sequence is Protein phosphatase inhibitor 2 family member B (205 aa).

A disordered region spans residues 1–44 (MAASTASHRPIKGILKNKTSTTSSMVASAEQPRRSVDEELSKKS). Ala2 carries the N-acetylalanine modification. Required for binding PPP1CC stretches follow at residues 12 to 17 (KGILKN) and 43 to 55 (KSQK…ILAT). Residues 17–26 (NKTSTTSSMV) show a composition bias toward polar residues. Basic and acidic residues predominate over residues 31 to 44 (QPRRSVDEELSKKS). Phosphoserine is present on Ser44. Phosphothreonine is present on residues Thr89 and Thr92. A disordered region spans residues 111 to 142 (EPKYRIQEQESSGEEDSDLSPEEREKKRQFEM). Ser121, Ser122, Ser127, and Ser130 each carry phosphoserine. The span at 121-130 (SSGEEDSDLS) shows a compositional bias: acidic residues. Over residues 131–142 (PEEREKKRQFEM) the composition is skewed to basic and acidic residues. The segment at 147–150 (HYNE) is required for binding PPP1CC catalytic center, displacing metal ions and inhibition of PPP1CC catalytic activity. A disordered region spans residues 163–205 (KDLHDDDEDEEMLETADGESMNTEESNQGSTPSDQQQNKLRSS). The span at 167–179 (DDDEDEEMLETAD) shows a compositional bias: acidic residues. Residues 182-205 (SMNTEESNQGSTPSDQQQNKLRSS) are compositionally biased toward polar residues.

This sequence belongs to the protein phosphatase inhibitor 2 family. As to quaternary structure, interacts with PPP1CC. Only detected in spermatozoa, both heads and tails.

Functionally, inhibitor of protein-phosphatase 1. In Homo sapiens (Human), this protein is Protein phosphatase inhibitor 2 family member B.